A 272-amino-acid polypeptide reads, in one-letter code: Undecaprenyl-diphosphatase (272 aa).

8 helical membrane passes run 4–24 (FEVI…FLPI), 43–63 (GGRV…CWLY), 86–106 (ISVL…VDFI), 109–129 (VLFS…IIFW), 145–165 (ITFK…IPGT), 186–206 (TEFS…FDLI), 222–242 (VGFV…VLFV), and 249–269 (VFAW…MFFN).

This sequence belongs to the UppP family.

It localises to the cell inner membrane. It carries out the reaction di-trans,octa-cis-undecaprenyl diphosphate + H2O = di-trans,octa-cis-undecaprenyl phosphate + phosphate + H(+). Its function is as follows. Catalyzes the dephosphorylation of undecaprenyl diphosphate (UPP). Confers resistance to bacitracin. The polypeptide is Undecaprenyl-diphosphatase (Acinetobacter baumannii (strain SDF)).